A 273-amino-acid polypeptide reads, in one-letter code: ATP synthase subunit a (273 aa).

The next 7 helical transmembrane spans lie at 41–61 (ILNI…LLIF), 101–121 (LIAP…LMDL), 122–142 (LAVD…ALRV), 143–163 (VPSA…ILII), 183–203 (PFNH…SLLS), 221–241 (LVFI…ISVP), and 247–267 (IIVI…YIAM).

The protein belongs to the ATPase A chain family. As to quaternary structure, F-type ATPases have 2 components, CF(1) - the catalytic core - and CF(0) - the membrane proton channel. CF(1) has five subunits: alpha(3), beta(3), gamma(1), delta(1), epsilon(1). CF(0) has three main subunits: a(1), b(2) and c(9-12). The alpha and beta chains form an alternating ring which encloses part of the gamma chain. CF(1) is attached to CF(0) by a central stalk formed by the gamma and epsilon chains, while a peripheral stalk is formed by the delta and b chains.

The protein resides in the cell membrane. Its function is as follows. Key component of the proton channel; it plays a direct role in the translocation of protons across the membrane. This Baumannia cicadellinicola subsp. Homalodisca coagulata protein is ATP synthase subunit a.